Reading from the N-terminus, the 417-residue chain is Serine hydroxymethyltransferase (417 aa).

(6S)-5,6,7,8-tetrahydrofolate contacts are provided by residues Leu-121 and 125–127 (GHL). Residue Lys-229 is modified to N6-(pyridoxal phosphate)lysine. A (6S)-5,6,7,8-tetrahydrofolate-binding site is contributed by 355 to 357 (SPF).

Belongs to the SHMT family. Homodimer. Requires pyridoxal 5'-phosphate as cofactor.

The protein resides in the cytoplasm. The catalysed reaction is (6R)-5,10-methylene-5,6,7,8-tetrahydrofolate + glycine + H2O = (6S)-5,6,7,8-tetrahydrofolate + L-serine. It participates in one-carbon metabolism; tetrahydrofolate interconversion. Its pathway is amino-acid biosynthesis; glycine biosynthesis; glycine from L-serine: step 1/1. Functionally, catalyzes the reversible interconversion of serine and glycine with tetrahydrofolate (THF) serving as the one-carbon carrier. This reaction serves as the major source of one-carbon groups required for the biosynthesis of purines, thymidylate, methionine, and other important biomolecules. Also exhibits THF-independent aldolase activity toward beta-hydroxyamino acids, producing glycine and aldehydes, via a retro-aldol mechanism. The protein is Serine hydroxymethyltransferase of Sodalis glossinidius (strain morsitans).